A 681-amino-acid chain; its full sequence is Macrolide export ATP-binding/permease protein MacB (681 aa).

The ABC transporter domain occupies 6-244 (LKLAAVTRRF…FAEVGVGAAA (239 aa)). Residue 42-49 (GASGSGKS) participates in ATP binding. Low complexity predominate over residues 246 to 273 (TETAADTRSAPASGDAPPPANNDTAADP). Positions 246–298 (TETAADTRSAPASGDAPPPANNDTAADPAPAPDASPPAPAVSPKHAGWRGSRS) are disordered. Pro residues predominate over residues 274–285 (APAPDASPPAPA). The next 4 membrane-spanning stretches (helical) occupy residues 306–326 (CLTM…VAVG), 554–574 (LTLL…IGVM), 611–631 (LVCL…GALF), and 644–664 (AGAI…FGFM).

It belongs to the ABC transporter superfamily. Macrolide exporter (TC 3.A.1.122) family. Homodimer.

It localises to the cell inner membrane. In terms of biological role, non-canonical ABC transporter that contains transmembrane domains (TMD), which form a pore in the inner membrane, and an ATP-binding domain (NBD), which is responsible for energy generation. Confers resistance against macrolides. This Burkholderia orbicola (strain AU 1054) protein is Macrolide export ATP-binding/permease protein MacB.